The primary structure comprises 2036 residues: Putative mediator of RNA polymerase II transcription subunit 24 (2036 aa).

Disordered regions lie at residues 51–70, 159–184, 212–451, 501–580, 754–840, 928–1124, 1375–1419, and 1565–1608; these read NNNNSNNNNNNNNNNNNNNV, DNIENSNNNNNNNNNNNNNNSNNNIG, SPSP…QTTT, KSVN…NNNN, NLKN…SHQK, NNNN…NKDL, NNKN…NNNN, and NSSA…NGDT. Positions 212 to 229 are enriched in low complexity; the sequence is SPSPSSSSSSSTSPSSQQ. The segment covering 260 to 270 has biased composition (basic and acidic residues); that stretch reads EIMKVKEEPIK. Low complexity-rich tracts occupy residues 273 to 291, 300 to 311, 387 to 451, 501 to 539, 547 to 580, and 754 to 770; these read TTTTTTSTTTTTSTTSTTT, TNGNGEETTITT, QPQP…QTTT, KSVNNNNNNNNNNNNNNNNNNNNNYNNNNNDSMDQNSNN, NNNNINNNNNNNNNNNNNNNNNNNNNNNNNNNNN, and NLKNNKNNNNNNNNSNG. Residues 505 to 584 are a coiled coil; it reads NNNNNNNNNN…NNNNNNINNI (80 aa). The segment covering 778–787 has biased composition (polar residues); sequence GSSTDGSNKL. Composition is skewed to low complexity over residues 788–808 and 928–943; these read SSTNIEEGNNNNNSSTHLNGN and NNNNNTNTNNINNNKN. Residues 943-977 adopt a coiled-coil conformation; sequence NKNSKKSNNKNKNNKNNNKKNKNNNNNNNNNNNNN. Basic residues predominate over residues 944–964; sequence KNSKKSNNKNKNNKNNNKKNK. 5 stretches are compositionally biased toward low complexity: residues 965-999, 1017-1118, 1385-1419, 1565-1584, and 1594-1608; these read NNNNNNNNNNNNNNNNNNNNNNNNNNNNNNNNNNN, NNNN…NNNN, SNNSSNNSINNINNNNNNNNNNNNNNNNNNNNNNN, NSSAYSTTTTTSASTSLPKS, and SSNTSTTTTKNNGDT. The stretch at 1915–1968 forms a coiled coil; that stretch reads SKNQSLKKKQKLKQKKQQHNNNNGGEYNIDQDHIEQIQQQQQQYQKQQQQRKDE.

This sequence belongs to the Mediator complex subunit 24 family. Component of the Mediator complex.

The protein resides in the nucleus. In terms of biological role, component of the Mediator complex, a coactivator involved in the regulated transcription of nearly all RNA polymerase II-dependent genes. Mediator functions as a bridge to convey information from gene-specific regulatory proteins to the basal RNA polymerase II transcription machinery. Mediator is recruited to promoters by direct interactions with regulatory proteins and serves as a scaffold for the assembly of a functional preinitiation complex with RNA polymerase II and the general transcription factors. In Dictyostelium discoideum (Social amoeba), this protein is Putative mediator of RNA polymerase II transcription subunit 24 (med24).